The following is a 137-amino-acid chain: uncharacterized protein (137 aa).

A signal peptide spans 1–21; that stretch reads MFNRRVLFLSVFSCAVFMLSG. C22 is lipidated: N-palmitoyl cysteine. C22 is lipidated: S-diacylglycerol cysteine.

The protein resides in the membrane. This is an uncharacterized protein from Escherichia coli (strain K12).